The following is a 79-amino-acid chain: Small ribosomal subunit protein bS16 (79 aa).

Belongs to the bacterial ribosomal protein bS16 family.

This chain is Small ribosomal subunit protein bS16, found in Desulfovibrio desulfuricans (strain ATCC 27774 / DSM 6949 / MB).